Here is a 742-residue protein sequence, read N- to C-terminus: Kanadaptin (742 aa).

Over residues 1-16 the composition is skewed to polar residues; that stretch reads MADILSQSETLASQDL. The disordered stretch occupies residues 1 to 112; the sequence is MADILSQSET…PPWGGPATAP (112 aa). Residues 27 to 43 show a composition bias toward low complexity; that stretch reads VSPAARSKAPASSSSNP. At Ser28 the chain carries Phosphoserine. A compositionally biased stretch (basic and acidic residues) spans 72–82; that stretch reads GDFRSLQEEQS. Phosphoserine is present on Ser90. The span at 96–106 shows a compositional bias: pro residues; it reads RAPPYQEPPWG. One can recognise an FHA domain in the interval 135–195; that stretch reads CLFGRLSGCD…HGTFLNKTRI (61 aa). Residues 254–282 are disordered; it reads LGEDSDEEEEMDTSERKINAGSQDDEMGC. Acidic residues predominate over residues 256-265; it reads EDSDEEEEMD. A phosphoserine mark is found at Ser258 and Ser412. Lys441 participates in a covalent cross-link: Glycyl lysine isopeptide (Lys-Gly) (interchain with G-Cter in SUMO2). The stretch at 443 to 476 forms a coiled coil; sequence ETFESLVAKLNDAERELSEISERLKASSQVLSES. Position 476 is a phosphoserine (Ser476). The interval 565–742 is disordered; that stretch reads LKTGTVGKLP…RTHLNDKYGY (178 aa). Over residues 591–606 the composition is skewed to acidic residues; it reads PEVEEEEEEEEEEEKE. The segment covering 607 to 619 has biased composition (basic and acidic residues); sequence KEEHEKKKLEDGS. 2 positions are modified to phosphoserine: Ser655 and Ser658. A compositionally biased stretch (low complexity) spans 699–708; the sequence is PGPGKLPPTL. The span at 732–742 shows a compositional bias: basic and acidic residues; it reads GRTHLNDKYGY.

In terms of tissue distribution, ubiquitously expressed.

The protein localises to the nucleus. Its subcellular location is the cytoplasm. This chain is Kanadaptin (SLC4A1AP), found in Homo sapiens (Human).